We begin with the raw amino-acid sequence, 641 residues long: Epithelial sodium channel subunit beta (641 aa).

The Cytoplasmic segment spans residues 1-50 (MHLKKYLLKGLHRLQKGPGYSYKELLVWYCNNTNTHGPKRIICEGPKKKA). The chain crosses the membrane as a helical span at residues 51-71 (MWFLITLLFTSLVCWQWGVFI). The Extracellular segment spans residues 72–533 (RTYLSWEVSV…GGQFGFWMGG (462 aa)). 9 disulfides stabilise this stretch: Cys-98/Cys-273, Cys-185/Cys-190, Cys-197/Cys-204, Cys-250/Cys-257, Cys-362/Cys-449, Cys-387/Cys-445, Cys-391/Cys-441, Cys-400/Cys-427, and Cys-402/Cys-416. N-linked (GlcNAc...) asparagine glycosylation is present at Asn-141. Residue Asn-261 is glycosylated (N-linked (GlcNAc...) asparagine). A helical transmembrane segment spans residues 534 to 554 (SVLCLIEFGEILIDFVWITII). The Cytoplasmic segment spans residues 555–641 (KLVAFAKSLR…IESDSEGDAI (87 aa)). The tract at residues 593–624 (PDVARPGPDPGTYPDEQTLPIPGTPPPNYDSL) is disordered. Residues 617 to 621 (PPPNY) carry the PY motif; recruits WW domain-containing proteins and is thereby required for ubiquitination and inhibition of the channel by NEDD4 and NEDD4L motif. Phosphoserine occurs at positions 634 and 636.

The protein belongs to the amiloride-sensitive sodium channel (TC 1.A.6) family. SCNN1B subfamily. Component of the heterotrimeric epithelial sodium channel (ENaC) composed of an alpha/SCNN1A, a beta/SCNN1B and a gamma/SCNN1G subunit. An additional delta/SCNN1D subunit can replace the alpha/SCNN1A subunit to form an alternative channel with specific properties. Interacts with WWP1 (via WW domains). Interacts with WWP2 (via WW domains); inhibits the channel. Interacts with the full-length immature form of PCSK9 (pro-PCSK9). Interacts (N-glycosylated) with BPIFA1; the interaction is direct and inhibits the proteolytic processing of SCNN1A and SCNN1G and the activation of ENaC. Ubiquitinated. Can be ubiquitinated at multiple sites and undergo monoubiquitination and polyubiquitination. Ubiquitination by NEDD4 or NEDD4L inhibits the ENaC channel through endocytosis, intracellular retention and degradation of its individual subunits. However, some studies could not confirm the ubiquitination of this subunit of the ENaC. Post-translationally, phosphorylated on serine and threonine residues. Aldosterone and insulin increase the basal level of phosphorylation. In terms of processing, N-glycosylated. N-glycosylation is required for interaction with BPIFA1.

The protein localises to the apical cell membrane. The protein resides in the cytoplasmic vesicle membrane. It carries out the reaction Na(+)(in) = Na(+)(out). Originally identified and characterized by its inhibition by the diuretic drug amiloride. In terms of biological role, this is one of the three pore-forming subunits of the heterotrimeric epithelial sodium channel (ENaC), a critical regulator of sodium balance and fluid homeostasis. ENaC operates in epithelial tissues, where it mediates the electrodiffusion of sodium ions from extracellular fluid through the apical membrane of cells, with water following osmotically. It plays a key role in maintaining sodium homeostasis through electrogenic sodium reabsorption in the kidneys. Additionally, ENaC is essential for airway surface liquid homeostasis, which is crucial for proper mucus clearance. This is Epithelial sodium channel subunit beta from Canis lupus familiaris (Dog).